The following is a 249-amino-acid chain: L-fucose operon activator (249 aa).

The 56-residue stretch at 1-56 folds into the HTH deoR-type domain; that stretch reads MNYRDELILQWVNQQGKASVIELAQHCDISVETIRRDLNKLANKGLLHRTHGGAVS. A DNA-binding region (H-T-H motif) is located at residues 18-37; sequence ASVIELAQHCDISVETIRRD.

Functionally, transcriptional activator of the fuc operon. The chain is L-fucose operon activator (fucR) from Haemophilus influenzae (strain ATCC 51907 / DSM 11121 / KW20 / Rd).